A 158-amino-acid polypeptide reads, in one-letter code: Protein Smg homolog (158 aa).

Belongs to the Smg family.

The polypeptide is Protein Smg homolog (Vibrio cholerae serotype O1 (strain ATCC 39315 / El Tor Inaba N16961)).